Reading from the N-terminus, the 507-residue chain is Proton-coupled zinc antiporter SLC30A1 (507 aa).

Residues 1–10 (MGCWGRNRGR) lie on the Cytoplasmic side of the membrane. A helical membrane pass occupies residues 11–31 (LLCMLALTFMFMVLEVVVSRV). Over 32–35 (TSSL) the chain is Extracellular. Residues 36–56 (AMLSDSFHMLSDVLALVVALV) form a helical membrane-spanning segment. 2 residues coordinate Zn(2+): His43 and Asp47. At 57–78 (AERFARRTHATQKNTFGWIRAE) the chain is on the cytoplasmic side. The helical transmembrane segment at 79-99 (VMGALVNAIFLTGLCFAILLE) threads the bilayer. Residues 100 to 113 (AIERFIEPHEMQQP) lie on the Extracellular side of the membrane. The chain crosses the membrane as a helical span at residues 114-134 (LVVLGVGVAGLLVNVLGLCLF). Topologically, residues 135–248 (HHHSGFSQDS…RAGQLNMRGV (114 aa)) are cytoplasmic. The interval 142–217 (QDSGHGHSHG…DPENPRSGDT (76 aa)) is disordered. Positions 146–158 (HGHSHGGHGHGHG) are 6 X 2 AA approximate repeats of H-G. Residues 147–167 (GHSHGGHGHGHGLPKGPRVKS) show a composition bias toward basic residues. Residues 189 to 201 (TNTLVANTSNSNG) are compositionally biased toward polar residues. A helical transmembrane segment spans residues 249-269 (FLHVLGDALGSVIVVVNALVF). The Zn(2+) site is built by His251 and Asp255. The Extracellular portion of the chain corresponds to 270-308 (YFSWKGCSEGDFCVNPCFPDPCKAFVEIINSTHASVYEA). An N-linked (GlcNAc...) asparagine glycan is attached at Asn299. The chain crosses the membrane as a helical span at residues 309–329 (GPCWVLYLDPTLCVVMVCILL). The Cytoplasmic portion of the chain corresponds to 330-507 (YTTYPLLKES…MPNKQPESSL (178 aa)). Ser506 is modified (phosphoserine).

It belongs to the cation diffusion facilitator (CDF) transporter (TC 2.A.4) family. SLC30A subfamily. In terms of assembly, homodimer. Interacts with TMEM163. Interacts and forms a complex with TMC6 and TMC8; the interaction regulates zinc transport into the ER. (Microbial infection) Interacts with human papillomavirus 16/HPV16 protein E5; the interaction alleviates SLC30A1-mediated transcription factors inhibition. In terms of processing, N-glycosylated at Asn-299. N-glycosylation promotes endocytosis and degradation through the proteasomal or lysosomal pathways.

It is found in the cell membrane. The protein resides in the basolateral cell membrane. Its subcellular location is the cytoplasmic vesicle membrane. The protein localises to the cytoplasm. It localises to the endoplasmic reticulum membrane. It is found in the golgi apparatus membrane. The protein resides in the nucleus membrane. It catalyses the reaction Zn(2+)(in) + 2 H(+)(out) = Zn(2+)(out) + 2 H(+)(in). Zinc ion:proton antiporter that could function at the plasma membrane mediating zinc efflux from cells against its electrochemical gradient protecting them from intracellular zinc accumulation and toxicity. Alternatively, could prevent the transport to the plasma membrane of CACNB2, the L-type calcium channels regulatory subunit, through a yet to be defined mechanism. By modulating the expression of these channels at the plasma membrane, could prevent calcium and zinc influx into cells. By the same mechanism, could also prevent L-type calcium channels-mediated heavy metal influx into cells. In some cells, could also function as a zinc ion:proton antiporter mediating zinc entry into the lumen of cytoplasmic vesicles. In macrophages, can increase zinc ions concentration into the lumen of cytoplasmic vesicles containing engulfed bacteria and could help inactivate them. Forms a complex with TMC6/EVER1 and TMC8/EVER2 at the ER membrane of keratynocytes which facilitates zinc uptake into the ER. Down-regulates the activity of transcription factors induced by zinc and cytokines. The polypeptide is Proton-coupled zinc antiporter SLC30A1 (Homo sapiens (Human)).